The chain runs to 396 residues: Elongation factor Tu (396 aa).

The tr-type G domain maps to 10-206 (KPHVNVGTIG…ALDSYIPDPE (197 aa)). A G1 region spans residues 19–26 (GHVDHGKT). 19–26 (GHVDHGKT) serves as a coordination point for GTP. Position 26 (Thr-26) interacts with Mg(2+). The interval 60–64 (GITIN) is G2. The interval 81-84 (DCPG) is G3. Residues 81 to 85 (DCPGH) and 136 to 139 (NKCD) contribute to the GTP site. Residues 136-139 (NKCD) are G4. Residues 174–176 (SAL) form a G5 region.

This sequence belongs to the TRAFAC class translation factor GTPase superfamily. Classic translation factor GTPase family. EF-Tu/EF-1A subfamily. Monomer.

The protein resides in the cytoplasm. It catalyses the reaction GTP + H2O = GDP + phosphate + H(+). Functionally, GTP hydrolase that promotes the GTP-dependent binding of aminoacyl-tRNA to the A-site of ribosomes during protein biosynthesis. This chain is Elongation factor Tu, found in Dechloromonas aromatica (strain RCB).